The chain runs to 40 residues: Photosystem II reaction center protein J (40 aa).

Residues 8–28 (IPLWLIGTVAGILVLGLLGIF) form a helical membrane-spanning segment.

It belongs to the PsbJ family. As to quaternary structure, PSII is composed of 1 copy each of membrane proteins PsbA, PsbB, PsbC, PsbD, PsbE, PsbF, PsbH, PsbI, PsbJ, PsbK, PsbL, PsbM, PsbT, PsbX, PsbY, PsbZ, Psb30/Ycf12, at least 3 peripheral proteins of the oxygen-evolving complex and a large number of cofactors. It forms dimeric complexes.

Its subcellular location is the plastid. The protein localises to the chloroplast thylakoid membrane. One of the components of the core complex of photosystem II (PSII). PSII is a light-driven water:plastoquinone oxidoreductase that uses light energy to abstract electrons from H(2)O, generating O(2) and a proton gradient subsequently used for ATP formation. It consists of a core antenna complex that captures photons, and an electron transfer chain that converts photonic excitation into a charge separation. The sequence is that of Photosystem II reaction center protein J from Physcomitrium patens (Spreading-leaved earth moss).